A 103-amino-acid chain; its full sequence is MIVPLSHVLAVAALLFAVGGVMAAARRSILLILIGVEFMLAAAGLAFAGAGLAWNNLDGQAAVIIIMGLASAEAGLGLALLVHGRRGGGTDRADSYDRLGEES.

3 helical membrane passes run 1-21 (MIVPLSHVLAVAALLFAVGGV), 29-49 (ILLILIGVEFMLAAAGLAFAG), and 62-82 (AVIIIMGLASAEAGLGLALLV). Residues 84–103 (GRRGGGTDRADSYDRLGEES) form a disordered region. A compositionally biased stretch (basic and acidic residues) spans 88 to 103 (GGTDRADSYDRLGEES).

Belongs to the complex I subunit 4L family. As to quaternary structure, NDH-1 is composed of 14 different subunits. Subunits NuoA, H, J, K, L, M, N constitute the membrane sector of the complex.

The protein localises to the cell inner membrane. The enzyme catalyses a quinone + NADH + 5 H(+)(in) = a quinol + NAD(+) + 4 H(+)(out). Functionally, NDH-1 shuttles electrons from NADH, via FMN and iron-sulfur (Fe-S) centers, to quinones in the respiratory chain. The immediate electron acceptor for the enzyme in this species is believed to be ubiquinone. Couples the redox reaction to proton translocation (for every two electrons transferred, four hydrogen ions are translocated across the cytoplasmic membrane), and thus conserves the redox energy in a proton gradient. This Solidesulfovibrio magneticus (strain ATCC 700980 / DSM 13731 / RS-1) (Desulfovibrio magneticus) protein is NADH-quinone oxidoreductase subunit K.